Reading from the N-terminus, the 50-residue chain is PsaJ-like protein asl3190 (50 aa).

A helical membrane pass occupies residues 21–41; the sequence is VLAVISISVAFSTWAIFNYIF.

The protein belongs to the PsaJ family.

It is found in the cellular thylakoid membrane. This is PsaJ-like protein asl3190 from Nostoc sp. (strain PCC 7120 / SAG 25.82 / UTEX 2576).